The following is a 561-amino-acid chain: Malate synthase, glyoxysomal (561 aa).

The Proton acceptor role is filled by arginine 177. The Proton donor role is filled by aspartate 462. Residues 559 to 561 (SRL) carry the Microbody targeting signal motif.

It belongs to the malate synthase family.

The protein localises to the glyoxysome. The enzyme catalyses glyoxylate + acetyl-CoA + H2O = (S)-malate + CoA + H(+). It functions in the pathway carbohydrate metabolism; glyoxylate cycle; (S)-malate from isocitrate: step 2/2. This is Malate synthase, glyoxysomal from Brassica napus (Rape).